The following is a 537-amino-acid chain: Frizzled-4 (537 aa).

The signal sequence occupies residues 1–36 (MAWRGAGPSVPGAPGGVGLSLGLLLQLLLLLGPARG). Over 37-212 (FGDEEERRCD…KCGYDAGLYS (176 aa)) the chain is Extracellular. One can recognise an FZ domain in the interval 40–161 (EEERRCDPIR…NDHNHMCMEG (122 aa)). 8 cysteine pairs are disulfide-bonded: Cys45-Cys106, Cys53-Cys99, Cys90-Cys128, Cys117-Cys158, Cys121-Cys145, Cys181-Cys200, Cys204-Cys282, and Cys302-Cys377. Asn59 carries N-linked (GlcNAc...) asparagine glycosylation. Asn144 carries N-linked (GlcNAc...) asparagine glycosylation. A helical membrane pass occupies residues 213 to 243 (RSAKEFTDIWMAVWASLCFISTAFTVLTFLI). At 244–249 (DSSRFS) the chain is on the cytoplasmic side. A helical membrane pass occupies residues 250–275 (YPERPIIFLSMCYNIYSIAYIVRLTV). Topologically, residues 276–299 (GRERISCDFEEAAEPVLIQEGLKN) are extracellular. Residues 300–333 (TGCAIIFLLMYFFGMASSIWWVILTLTWFLAAGL) traverse the membrane as a helical segment. Residues 334 to 336 (KWG) lie on the Cytoplasmic side of the membrane. The chain crosses the membrane as a helical span at residues 337–365 (HEAIEMHSSYFHIAAWAIPAVKTIVILIM). Over 366-383 (RLVDADELTGLCYVGNQN) the chain is Extracellular. A helical transmembrane segment spans residues 384–418 (LDALTGFVVAPLFTYLVIGTLFIAAGLVALFKIRS). Residues 419–431 (NLQKDGTKTDKLE) are Cytoplasmic-facing. A helical membrane pass occupies residues 432–460 (RLMVKIGVFSVLYTVPATCVIACYFYEIS). Topologically, residues 461–473 (NWALFRYSADDSN) are extracellular. The chain crosses the membrane as a helical span at residues 474-495 (MAVEMLKIFMSLLVGITSGMWI). Topologically, residues 496-537 (WSAKTLHTWQKCSNRLVNSGKVKREKRGNGWVKPGKGSETVV) are cytoplasmic. The short motif at 499 to 504 (KTLHTW) is the Lys-Thr-X-X-X-Trp motif, mediates interaction with the PDZ domain of Dvl family members element. Residues 535–537 (TVV) carry the PDZ-binding motif.

Belongs to the G-protein coupled receptor Fz/Smo family. Interacts with MAGI3 and NDP. Component of a complex, at least composed of TSPAN12, FZD4 and norrin (NDP). Interacts (via FZ domain) with TSKU; TSKU competes with WNT2B for binding to FZD4, inhibiting Wnt signaling and repressing peripheral eye development. Interacts with glypican GPC3. Ubiquitinated by ZNRF3, leading to its degradation by the proteasome. Almost ubiquitous. Largely expressed in adult heart, skeletal muscle, ovary, and fetal kidney. Moderate amounts in adult liver, kidney, pancreas, spleen, and fetal lung, and small amounts in placenta, adult lung, prostate, testis, colon, fetal brain and liver.

The protein localises to the cell membrane. Functionally, receptor for Wnt proteins. Most frizzled receptors are coupled to the beta-catenin (CTNNB1) canonical signaling pathway, which leads to the activation of disheveled proteins, inhibition of GSK-3 kinase, nuclear accumulation of beta-catenin (CTNNB1) and activation of Wnt target genes. Plays a critical role in retinal vascularization by acting as a receptor for Wnt proteins and norrin (NDP). In retina, it can be activated by Wnt protein-binding and also by Wnt-independent signaling via binding of norrin (NDP), promoting in both cases beta-catenin (CTNNB1) accumulation and stimulation of LEF/TCF-mediated transcriptional programs. A second signaling pathway involving PKC and calcium fluxes has been seen for some family members, but it is not yet clear if it represents a distinct pathway or if it can be integrated in the canonical pathway, as PKC seems to be required for Wnt-mediated inactivation of GSK-3 kinase. Both pathways seem to involve interactions with G-proteins. May be involved in transduction and intercellular transmission of polarity information during tissue morphogenesis and/or in differentiated tissues. In Homo sapiens (Human), this protein is Frizzled-4 (FZD4).